Here is a 240-residue protein sequence, read N- to C-terminus: Uridylate kinase (240 aa).

An ATP-binding site is contributed by Lys-13–Gly-16. An involved in allosteric activation by GTP region spans residues Gly-21 to Gly-26. Residue Gly-55 coordinates UMP. Gly-56 and Arg-60 together coordinate ATP. UMP is bound by residues Asp-75 and Thr-136 to Thr-143. ATP-binding residues include Thr-163, Gln-164, Tyr-169, and Asp-172.

It belongs to the UMP kinase family. Homohexamer.

Its subcellular location is the cytoplasm. It catalyses the reaction UMP + ATP = UDP + ADP. The protein operates within pyrimidine metabolism; CTP biosynthesis via de novo pathway; UDP from UMP (UMPK route): step 1/1. Allosterically activated by GTP. Inhibited by UTP. Catalyzes the reversible phosphorylation of UMP to UDP. This Rhizobium etli (strain ATCC 51251 / DSM 11541 / JCM 21823 / NBRC 15573 / CFN 42) protein is Uridylate kinase.